Here is a 240-residue protein sequence, read N- to C-terminus: MAQISKYKRVVLKLSGEALAGEKGFGINPVIIKSVAEQVAEVAKMDCEIAVIVGGGNIWRGKTGSDLGMDRGTADYMGMLATVMNALALQDSLEQLDCDTRVLTSIEMKQVAEPYIRRRAIRHLEKKRIVIFAAGIGNPYFSTDTTAALRAAEVEADVILMGKNNVDGVYSADPKVNKDAVKYEHLTHIQMLQEGLQVMDSTASSFCMDNNIPLTVFSIMEEGNIKRAVMGEKIGTLITK.

13 to 16 (KLSG) provides a ligand contact to ATP. Residues 21 to 26 (GEKGFG) form an involved in allosteric activation by GTP region. Gly55 contacts UMP. Residues Gly56 and Arg60 each contribute to the ATP site. Residues Asp75 and 136–143 (IGNPYFST) each bind UMP. Residues Asn164, Tyr170, and Asp173 each coordinate ATP.

Belongs to the UMP kinase family. As to quaternary structure, homohexamer.

The protein resides in the cytoplasm. It catalyses the reaction UMP + ATP = UDP + ADP. The protein operates within pyrimidine metabolism; CTP biosynthesis via de novo pathway; UDP from UMP (UMPK route): step 1/1. Its activity is regulated as follows. Allosterically activated by GTP. Inhibited by UTP. Its function is as follows. Catalyzes the reversible phosphorylation of UMP to UDP. The protein is Uridylate kinase of Staphylococcus aureus (strain Newman).